Consider the following 206-residue polypeptide: Ras-related protein Rab7 (206 aa).

GTP is bound by residues Gly-15–Thr-22, Asp-63–Gln-67, and Asn-125–Asp-128. Residues Cys-205 and Cys-206 are each lipidated (S-geranylgeranyl cysteine).

This sequence belongs to the small GTPase superfamily. Rab family.

It is found in the cell membrane. In terms of biological role, protein transport. Probably involved in vesicular traffic. This Cenchrus ciliaris (Buffelgrass) protein is Ras-related protein Rab7.